An 87-amino-acid chain; its full sequence is Sec-independent protein translocase protein TatA (87 aa).

Residues 1-21 (MGGMSITHWIVVAVVVMIFFG) traverse the membrane as a helical segment. Residues 40-87 (KKGMSEDDTTPPAAPPAPAPRLENQPLPPENTTQNVAQNVPNDIKNNQ) are disordered. Polar residues predominate over residues 69 to 87 (ENTTQNVAQNVPNDIKNNQ).

It belongs to the TatA/E family. In terms of assembly, the Tat system comprises two distinct complexes: a TatABC complex, containing multiple copies of TatA, TatB and TatC subunits, and a separate TatA complex, containing only TatA subunits. Substrates initially bind to the TatABC complex, which probably triggers association of the separate TatA complex to form the active translocon.

It is found in the cell inner membrane. Functionally, part of the twin-arginine translocation (Tat) system that transports large folded proteins containing a characteristic twin-arginine motif in their signal peptide across membranes. TatA could form the protein-conducting channel of the Tat system. In Zymomonas mobilis subsp. mobilis (strain ATCC 31821 / ZM4 / CP4), this protein is Sec-independent protein translocase protein TatA.